Here is a 472-residue protein sequence, read N- to C-terminus: Glutamyl-tRNA(Gln) amidotransferase subunit A (472 aa).

Active-site charge relay system residues include Lys-69 and Ser-144. Ser-168 serves as the catalytic Acyl-ester intermediate.

The protein belongs to the amidase family. GatA subfamily. In terms of assembly, heterotrimer of A, B and C subunits.

It carries out the reaction L-glutamyl-tRNA(Gln) + L-glutamine + ATP + H2O = L-glutaminyl-tRNA(Gln) + L-glutamate + ADP + phosphate + H(+). In terms of biological role, allows the formation of correctly charged Gln-tRNA(Gln) through the transamidation of misacylated Glu-tRNA(Gln) in organisms which lack glutaminyl-tRNA synthetase. The reaction takes place in the presence of glutamine and ATP through an activated gamma-phospho-Glu-tRNA(Gln). The polypeptide is Glutamyl-tRNA(Gln) amidotransferase subunit A (Sulfurisphaera tokodaii (strain DSM 16993 / JCM 10545 / NBRC 100140 / 7) (Sulfolobus tokodaii)).